An 899-amino-acid polypeptide reads, in one-letter code: Protein translocase subunit SecA (899 aa).

Residues Gln87, 105 to 109 (GEGKT), and Asp512 each bind ATP. The disordered stretch occupies residues 846–899 (MEEEQQQQAQKKIVFNLGEEPATAPQPARSKKSASRNDPCPCGSGKKYKKCCGK). Cys885, Cys887, Cys896, and Cys897 together coordinate Zn(2+).

The protein belongs to the SecA family. As to quaternary structure, monomer and homodimer. Part of the essential Sec protein translocation apparatus which comprises SecA, SecYEG and auxiliary proteins SecDF-YajC and YidC. Zn(2+) serves as cofactor.

It localises to the cell inner membrane. It is found in the cytoplasm. The enzyme catalyses ATP + H2O + cellular proteinSide 1 = ADP + phosphate + cellular proteinSide 2.. Its function is as follows. Part of the Sec protein translocase complex. Interacts with the SecYEG preprotein conducting channel. Has a central role in coupling the hydrolysis of ATP to the transfer of proteins into and across the cell membrane, serving as an ATP-driven molecular motor driving the stepwise translocation of polypeptide chains across the membrane. The protein is Protein translocase subunit SecA of Geobacter metallireducens (strain ATCC 53774 / DSM 7210 / GS-15).